We begin with the raw amino-acid sequence, 1491 residues long: Pleckstrin homology domain-containing family H member 2 (1491 aa).

Positions 19–177 (ALEAQLMKFR…ELQEKKISCV (159 aa)) form a coiled coil. Disordered regions lie at residues 232 to 435 (AEKP…PFQP), 506 to 546 (DDGL…LHRF), and 612 to 668 (SSSP…SDYA). Residues 253–264 (TSCSSEQNQKTR) are compositionally biased toward polar residues. A compositionally biased stretch (basic and acidic residues) spans 374–385 (KEQDSSSDELNK). Residues 392 to 406 (LDYTSSSSEANTPSP) show a composition bias toward polar residues. Residues 657–666 (SDSSAASESD) are compositionally biased toward low complexity. PH domains are found at residues 702–796 (PLEK…SVLR) and 810–918 (KPAV…VAAG). A MyTH4 domain is found at 954–1109 (HSKEGILSPL…PSRMEILSTL (156 aa)). Positions 1120–1449 (FSIPVHFMNG…SYINSFHQQK (330 aa)) constitute an FERM domain. The segment at 1466-1491 (QAPQARVMGSQPPLSNSRPTKGPTLL) is disordered.

In terms of assembly, self-associates. Interacts with TGFB1I1. Expressed in the kidney and testis. Expressed in the kidney exclusively by glomerular podocytes.

It is found in the cytoplasm. The protein localises to the cytoskeleton. Its subcellular location is the cell membrane. The protein resides in the cell projection. It localises to the lamellipodium. In the kidney glomerulus may play a role in linking podocyte foot processes to the glomerular basement membrane. May be involved in stabilization of F-actin by attenuating its depolymerization. Can recruit TGFB1I1 from focal adhesions to podocyte lamellipodia. The sequence is that of Pleckstrin homology domain-containing family H member 2 (Plekhh2) from Mus musculus (Mouse).